A 492-amino-acid polypeptide reads, in one-letter code: WD repeat-containing protein JIP5 (492 aa).

5 WD repeats span residues 127–166 (RHKGSVRAMCFDSKGDNIFSVGSDNVLKKANTMTGKVVKK), 178–217 (KKNDKFTKLCASQTHPFILIGDESGNIHVINSENLALSNS), 236–274 (RSAYKFISLGQTTLAYFDVRDKDAKPNVAGNEDGKILIS), 276–317 (DQED…LEDQ), and 365–405 (RNHS…VEEN). Composition is skewed to acidic residues over residues 404–414 (ENASVESDSDE) and 422–433 (DLSDDTSSDDET). The interval 404-472 (ENASVESDSD…SKSVKKRKIM (69 aa)) is disordered. Residues 449-462 (KDLKEDHQEEKESN) are compositionally biased toward basic and acidic residues.

In terms of assembly, interacts with BUD27 and GIS1.

Its subcellular location is the nucleus. It is found in the nucleolus. This chain is WD repeat-containing protein JIP5 (JIP5), found in Saccharomyces cerevisiae (strain ATCC 204508 / S288c) (Baker's yeast).